A 349-amino-acid chain; its full sequence is MTDSKPDALTYADAGVDIDAGNALVDRIKPAAAATNRAGVMAGLGGFGALFDLKAAGYDDPVLVAATDGVGTKLKIAIDTGNFDTIGVDLVAMCVNDLVCQGAEPLFFLDYFATGKLDVDDAARIVEGIAAGCKASGCALIGGETAEMPGMYAPGDFDLAGFSVGAMERGRALPDGVAEGDVLLGLASDGVHSNGYSLVRRVVERSGLAWDAPAPFAQSSLGEALLAPTRLYVQPALAAIRAGGVHALAHITGGGLTENIPRVLPDGLGVDIDLSSWSLPPVFGWLAQEGALDQAELLKTFNAGLGMVLVVSADAVDGLTWTLEDAGESVHRIGTVTAGAGVRYSGSLG.

It belongs to the AIR synthase family.

The protein localises to the cytoplasm. The catalysed reaction is 2-formamido-N(1)-(5-O-phospho-beta-D-ribosyl)acetamidine + ATP = 5-amino-1-(5-phospho-beta-D-ribosyl)imidazole + ADP + phosphate + H(+). Its pathway is purine metabolism; IMP biosynthesis via de novo pathway; 5-amino-1-(5-phospho-D-ribosyl)imidazole from N(2)-formyl-N(1)-(5-phospho-D-ribosyl)glycinamide: step 2/2. This is Phosphoribosylformylglycinamidine cyclo-ligase from Jannaschia sp. (strain CCS1).